The primary structure comprises 638 residues: MDLWQLLLTLALAGSSDAFSGSEPTAAILSRASWSLQSVNPGLKTNSSKEPKFTKCRSPERETFSCHWTDAVHHGSKSLGPIQLFYTRRNIQEWTQEWKECPDYVSAGENSCYFNSSFTSVWIPYCIKLTSNGDTVDGKCFSVDEIVQPDPPIALNWTLLNVSLTGIHADIQVRWEAPPNADIQKGWMVLEYELQYKEVNETKWKMMDPILSTSVPVYSLKVDKEYEVRVRSKRRNSGNYGEFSEVLYVTLPQMNQFTCEEDFYFPWLLIIIFGIFGLTVMLFVFLFSKQQRIKMLILPPVPVPKIKGIDPDLLKEGKLEEVNTILAIHDSYKPEFHSDDSWVEFIELDIDEPDEKNEGSDTDRLLSSDHQKSHSNLGVKDGDSGRTSCYEPDILETDFNANNIHEGTSEVAQPQRLKGEADLLCLDQKNQNKSPYHDACPAAQQSSVIQAEKNKPQPLPTDGAESTHQAAHIQLSNPSSLANIDFYAQVSDITPAGSVVLSPGQKNKAGMSQCDMHLEMVSLCQEDFIMDNAYFCEADAKKCIPVAPHIKVESHIEPSFNQEDIYITTESLTTTAGRPGTTEHIPGSEMPVPDYTSIHIVQSPQGLILNATALPLPGKEFLSSCGYVSTDQLNKIMP.

Residues 1–18 (MDLWQLLLTLALAGSSDA) form the signal peptide. Topologically, residues 19-264 (FSGSEPTAAI…NQFTCEEDFY (246 aa)) are extracellular. A glycan (N-linked (GlcNAc...) asparagine) is linked at asparagine 46. Cystine bridges form between cysteine 56-cysteine 66 and cysteine 101-cysteine 112. Asparagine 115 carries an N-linked (GlcNAc...) asparagine glycan. The cysteines at positions 126 and 140 are disulfide-linked. Residues 151–254 (PPIALNWTLL…EVLYVTLPQM (104 aa)) enclose the Fibronectin type-III domain. N-linked (GlcNAc...) asparagine glycans are attached at residues asparagine 156, asparagine 161, and asparagine 200. The WSXWS motif motif lies at 240 to 244 (YGEFS). A helical transmembrane segment spans residues 265–288 (FPWLLIIIFGIFGLTVMLFVFLFS). The Cytoplasmic portion of the chain corresponds to 289 to 638 (KQQRIKMLIL…STDQLNKIMP (350 aa)). Positions 294-379 (KMLILPPVPV…HQKSHSNLGV (86 aa)) are required for JAK2 binding. A Box 1 motif motif is present at residues 297–305 (ILPPVPVPK). The UbE motif motif lies at 340-349 (DSWVEFIELD). The residue at position 341 (serine 341) is a Phosphoserine. A disordered region spans residues 353 to 388 (PDEKNEGSDTDRLLSSDHQKSHSNLGVKDGDSGRTS). Over residues 356 to 372 (KNEGSDTDRLLSSDHQK) the composition is skewed to basic and acidic residues. 2 positions are modified to phosphotyrosine: tyrosine 487 and tyrosine 595.

This sequence belongs to the type I cytokine receptor family. Type 1 subfamily. On growth hormone (GH) binding, forms homodimers and binds JAK2 via a box 1-containing domain. Post-translationally, the soluble form (GHBP) is produced by phorbol ester-promoted proteolytic cleavage at the cell surface (shedding) by ADAM17/TACE. Shedding is inhibited by growth hormone (GH) binding to the receptor probably due to a conformational change in GHR rendering the receptor inaccessible to ADAM17. On GH binding, phosphorylated on tyrosine residues in the cytoplasmic domain by JAK2. In terms of processing, ubiquitinated by the ECS(SOCS2) complex following ligand-binding and phosphorylation by JAK2, leading to its degradation by the proteasome. Regulation by the ECS(SOCS2) complex acts as a negative feedback loop of growth hormone receptor signaling. Ubiquitination is not sufficient for GHR internalization.

The protein localises to the cell membrane. It localises to the secreted. Functionally, receptor for pituitary gland growth hormone (GH1) involved in regulating postnatal body growth. On ligand binding, couples to the JAK2/STAT5 pathway. The soluble form (GHBP) acts as a reservoir of growth hormone in plasma and may be a modulator/inhibitor of GH signaling. The polypeptide is Growth hormone receptor (GHR) (Papio anubis (Olive baboon)).